Here is a 404-residue protein sequence, read N- to C-terminus: Cysteine desulfurase IscS (404 aa).

Residues 75–76 (AT), Asn155, Gln183, and 203–205 (SAH) each bind pyridoxal 5'-phosphate. Residue Lys206 is modified to N6-(pyridoxal phosphate)lysine. Thr243 serves as a coordination point for pyridoxal 5'-phosphate. Cys328 acts as the Cysteine persulfide intermediate in catalysis. Cys328 serves as a coordination point for [2Fe-2S] cluster.

This sequence belongs to the class-V pyridoxal-phosphate-dependent aminotransferase family. NifS/IscS subfamily. In terms of assembly, homodimer. Forms a heterotetramer with IscU, interacts with other sulfur acceptors. Pyridoxal 5'-phosphate is required as a cofactor.

Its subcellular location is the cytoplasm. It catalyses the reaction (sulfur carrier)-H + L-cysteine = (sulfur carrier)-SH + L-alanine. It participates in cofactor biosynthesis; iron-sulfur cluster biosynthesis. Functionally, master enzyme that delivers sulfur to a number of partners involved in Fe-S cluster assembly, tRNA modification or cofactor biosynthesis. Catalyzes the removal of elemental sulfur atoms from cysteine to produce alanine. Functions as a sulfur delivery protein for Fe-S cluster synthesis onto IscU, an Fe-S scaffold assembly protein, as well as other S acceptor proteins. This Vesicomyosocius okutanii subsp. Calyptogena okutanii (strain HA) protein is Cysteine desulfurase IscS.